Here is a 557-residue protein sequence, read N- to C-terminus: Dihydroxy-acid dehydratase (557 aa).

C50 is a [2Fe-2S] cluster binding site. Residue D82 coordinates Mg(2+). [2Fe-2S] cluster is bound at residue C123. Mg(2+)-binding residues include D124 and K125. K125 carries the post-translational modification N6-carboxylysine. C195 is a binding site for [2Fe-2S] cluster. A Mg(2+)-binding site is contributed by E447. The active-site Proton acceptor is S473.

The protein belongs to the IlvD/Edd family. As to quaternary structure, homodimer. [2Fe-2S] cluster is required as a cofactor. Mg(2+) serves as cofactor.

It catalyses the reaction (2R)-2,3-dihydroxy-3-methylbutanoate = 3-methyl-2-oxobutanoate + H2O. The catalysed reaction is (2R,3R)-2,3-dihydroxy-3-methylpentanoate = (S)-3-methyl-2-oxopentanoate + H2O. It participates in amino-acid biosynthesis; L-isoleucine biosynthesis; L-isoleucine from 2-oxobutanoate: step 3/4. Its pathway is amino-acid biosynthesis; L-valine biosynthesis; L-valine from pyruvate: step 3/4. Functions in the biosynthesis of branched-chain amino acids. Catalyzes the dehydration of (2R,3R)-2,3-dihydroxy-3-methylpentanoate (2,3-dihydroxy-3-methylvalerate) into 2-oxo-3-methylpentanoate (2-oxo-3-methylvalerate) and of (2R)-2,3-dihydroxy-3-methylbutanoate (2,3-dihydroxyisovalerate) into 2-oxo-3-methylbutanoate (2-oxoisovalerate), the penultimate precursor to L-isoleucine and L-valine, respectively. The chain is Dihydroxy-acid dehydratase from Nitrosomonas europaea (strain ATCC 19718 / CIP 103999 / KCTC 2705 / NBRC 14298).